The sequence spans 362 residues: N-acylethanolamine-hydrolyzing acid amidase (362 aa).

An N-terminal signal peptide occupies residues 1 to 33; the sequence is MGTPAIRAACHGAHLALALLLLLSLSDPWLWAT. N-linked (GlcNAc...) asparagine glycosylation is found at N42 and N112. The active-site Nucleophile is C131. 2 N-linked (GlcNAc...) asparagine glycosylation sites follow: N314 and N338.

Belongs to the acid ceramidase family. In terms of assembly, heterodimer of an alpha and a beta subunit, produced by autocatalytic cleavage. N-glycosylated. Tunicamycin treatment causes a reduction in specific activity against N-palmitoylethanolamine. Post-translationally, autoproteolytic cleavage at pH 4.5 gives rise to the alpha and beta subunit. Cleavage gives rise to a conformation change that activates the enzyme. The same catalytic Cys residue mediates the autoproteolytic cleavage and subsequent hydrolysis of lipid substrates. In terms of tissue distribution, expressed in brain, cecum, colon, heart, ileum, kidney, liver, lung, spleen, stomach, submaxillary gland, testis and thymus.

Its subcellular location is the lysosome. It is found in the membrane. It carries out the reaction N-hexadecanoylethanolamine + H2O = ethanolamine + hexadecanoate. The catalysed reaction is an N-(long-chain fatty acyl)ethanolamine + H2O = a long-chain fatty acid + ethanolamine. The enzyme catalyses N-dodecanoylethanolamine + H2O = dodecanoate + ethanolamine. It catalyses the reaction N-tetradecanoylethanolamine + H2O = tetradecanoate + ethanolamine. It carries out the reaction an N-acylsphing-4-enine + H2O = sphing-4-enine + a fatty acid. The catalysed reaction is N-hexadecanoylsphing-4-enine + H2O = sphing-4-enine + hexadecanoate. The enzyme catalyses N-dodecanoylsphing-4-enine + H2O = dodecanoate + sphing-4-enine. It participates in lipid metabolism; fatty acid metabolism. Stimulated by DTT. Stimulated by nonionic detergent of the polyoxyethylenep-t-octylphenylether type (Triton X-100 or Nonidet P-40) whereas 3-[(3-cholamidopropyl)dimethylammonio]propane-1-sulfonate (CHAPS) and octyl alpha-D-glucopyranoside decrease the N-(long-chain-acyl)ethanolamine deacylase activity. Polysorbate 20 (Tween 20) is inhibitory. Stimulated by endogenous phospholipids such as choline- or ethanolamine-containing phospholipids, and dihydrolipoic acid. Degrades bioactive fatty acid amides to their corresponding acids, with the following preference: N-palmitoylethanolamine &gt; N-myristoylethanolamine &gt; N-stearoylethanolamine &gt; N-oleoylethanolamine &gt; N-linoleoylethanolamine &gt; N-arachidonoylethanolamine. The chain is N-acylethanolamine-hydrolyzing acid amidase from Rattus norvegicus (Rat).